A 161-amino-acid chain; its full sequence is Urease accessory protein UreE (161 aa).

A disordered region spans residues 138-161 (RGAYHAHGGHSHDHGQGHHHHDHG).

The protein belongs to the UreE family.

It is found in the cytoplasm. Its function is as follows. Involved in urease metallocenter assembly. Binds nickel. Probably functions as a nickel donor during metallocenter assembly. This is Urease accessory protein UreE from Agrobacterium fabrum (strain C58 / ATCC 33970) (Agrobacterium tumefaciens (strain C58)).